A 150-amino-acid chain; its full sequence is Nucleoside diphosphate kinase (150 aa).

6 residues coordinate ATP: K9, F57, R85, T91, R102, and N112. H115 serves as the catalytic Pros-phosphohistidine intermediate.

This sequence belongs to the NDK family. Homotetramer. The cofactor is Mg(2+).

It localises to the cytoplasm. The enzyme catalyses a 2'-deoxyribonucleoside 5'-diphosphate + ATP = a 2'-deoxyribonucleoside 5'-triphosphate + ADP. It carries out the reaction a ribonucleoside 5'-diphosphate + ATP = a ribonucleoside 5'-triphosphate + ADP. Its function is as follows. Major role in the synthesis of nucleoside triphosphates other than ATP. The ATP gamma phosphate is transferred to the NDP beta phosphate via a ping-pong mechanism, using a phosphorylated active-site intermediate. In Symbiobacterium thermophilum (strain DSM 24528 / JCM 14929 / IAM 14863 / T), this protein is Nucleoside diphosphate kinase.